A 221-amino-acid chain; its full sequence is Adenylate kinase (221 aa).

Residue 10–15 participates in ATP binding; sequence GAGKGT. An NMP region spans residues 30 to 59; that stretch reads STGDMLRAAVKAGTEFGVAAKKIMDAGGLV. Residues threonine 31, arginine 36, 57 to 59, 85 to 88, and glutamine 92 each bind AMP; these read GLV and GFPR. Residues 122 to 159 are LID; sequence GRRVHPASGRTYHIKYNPPKVEGKDDVTGDALIQRDDD. Residues arginine 123 and 132–133 contribute to the ATP site; that span reads TY. 2 residues coordinate AMP: arginine 156 and arginine 167. Residue glycine 207 participates in ATP binding.

This sequence belongs to the adenylate kinase family. Monomer.

The protein resides in the cytoplasm. The enzyme catalyses AMP + ATP = 2 ADP. It functions in the pathway purine metabolism; AMP biosynthesis via salvage pathway; AMP from ADP: step 1/1. Its function is as follows. Catalyzes the reversible transfer of the terminal phosphate group between ATP and AMP. Plays an important role in cellular energy homeostasis and in adenine nucleotide metabolism. This chain is Adenylate kinase, found in Polynucleobacter asymbioticus (strain DSM 18221 / CIP 109841 / QLW-P1DMWA-1) (Polynucleobacter necessarius subsp. asymbioticus).